Consider the following 443-residue polypeptide: Ribosomal protein uS12 methylthiotransferase RimO (443 aa).

One can recognise an MTTase N-terminal domain in the interval 10–120 (PRVGFVSLGC…VMAAVHAQCP (111 aa)). [4Fe-4S] cluster-binding residues include cysteine 19, cysteine 55, cysteine 84, cysteine 152, cysteine 156, and cysteine 159. The Radical SAM core domain maps to 138–375 (LTPRHYAYLK…MALQAEISAR (238 aa)). Residues 378 to 443 (ARRVGTECTV…DEHDLYGRVL (66 aa)) form the TRAM domain.

Belongs to the methylthiotransferase family. RimO subfamily. It depends on [4Fe-4S] cluster as a cofactor.

The protein resides in the cytoplasm. The enzyme catalyses L-aspartate(89)-[ribosomal protein uS12]-hydrogen + (sulfur carrier)-SH + AH2 + 2 S-adenosyl-L-methionine = 3-methylsulfanyl-L-aspartate(89)-[ribosomal protein uS12]-hydrogen + (sulfur carrier)-H + 5'-deoxyadenosine + L-methionine + A + S-adenosyl-L-homocysteine + 2 H(+). Functionally, catalyzes the methylthiolation of an aspartic acid residue of ribosomal protein uS12. The chain is Ribosomal protein uS12 methylthiotransferase RimO from Alkalilimnicola ehrlichii (strain ATCC BAA-1101 / DSM 17681 / MLHE-1).